The sequence spans 72 residues: Small ribosomal subunit protein bS18 (72 aa).

It belongs to the bacterial ribosomal protein bS18 family. Part of the 30S ribosomal subunit. Forms a tight heterodimer with protein bS6.

Its function is as follows. Binds as a heterodimer with protein bS6 to the central domain of the 16S rRNA, where it helps stabilize the platform of the 30S subunit. This Francisella philomiragia subsp. philomiragia (strain ATCC 25017 / CCUG 19701 / FSC 153 / O#319-036) protein is Small ribosomal subunit protein bS18.